The sequence spans 293 residues: 33 kDa chaperonin (293 aa).

Disulfide bonds link Cys-238/Cys-240 and Cys-271/Cys-274.

It belongs to the HSP33 family. Under oxidizing conditions two disulfide bonds are formed involving the reactive cysteines. Under reducing conditions zinc is bound to the reactive cysteines and the protein is inactive.

It localises to the cytoplasm. Its function is as follows. Redox regulated molecular chaperone. Protects both thermally unfolding and oxidatively damaged proteins from irreversible aggregation. Plays an important role in the bacterial defense system toward oxidative stress. In Staphylococcus epidermidis (strain ATCC 35984 / DSM 28319 / BCRC 17069 / CCUG 31568 / BM 3577 / RP62A), this protein is 33 kDa chaperonin.